The sequence spans 246 residues: ATP synthase subunit b 1 (246 aa).

A helical transmembrane segment spans residues 5 to 27 (WFTFTAQVINFLVLVGLLRYFLY).

Belongs to the ATPase B chain family. As to quaternary structure, F-type ATPases have 2 components, F(1) - the catalytic core - and F(0) - the membrane proton channel. F(1) has five subunits: alpha(3), beta(3), gamma(1), delta(1), epsilon(1). F(0) has three main subunits: a(1), b(2) and c(10-14). The alpha and beta chains form an alternating ring which encloses part of the gamma chain. F(1) is attached to F(0) by a central stalk formed by the gamma and epsilon chains, while a peripheral stalk is formed by the delta and b chains.

The protein localises to the cell inner membrane. F(1)F(0) ATP synthase produces ATP from ADP in the presence of a proton or sodium gradient. F-type ATPases consist of two structural domains, F(1) containing the extramembraneous catalytic core and F(0) containing the membrane proton channel, linked together by a central stalk and a peripheral stalk. During catalysis, ATP synthesis in the catalytic domain of F(1) is coupled via a rotary mechanism of the central stalk subunits to proton translocation. Functionally, component of the F(0) channel, it forms part of the peripheral stalk, linking F(1) to F(0). This Rhodopirellula baltica (strain DSM 10527 / NCIMB 13988 / SH1) protein is ATP synthase subunit b 1.